The primary structure comprises 262 residues: Sulfite reductase, dissimilatory-type subunit beta (262 aa).

Residues Cys151, Cys188, Cys189, Cys193, Cys231, Cys258, and Cys261 each coordinate [4Fe-4S] cluster. Siroheme is bound at residue Cys193.

Heterohexamer of two alpha, two beta and two gamma subunits. [4Fe-4S] cluster is required as a cofactor. It depends on siroheme as a cofactor.

It carries out the reaction [DsrC protein]-trisulfide + NAD(+) + 3 H2O = [DsrC protein]-dithiol + sulfite + NADH + 3 H(+). In terms of biological role, catalyzes the reduction of sulfite to sulfide. This is the terminal oxidation reaction in sulfate respiration, a process catalyzed by the sulfate-reducing bacteria. This chain is Sulfite reductase, dissimilatory-type subunit beta (dsrB), found in Megalodesulfovibrio gigas (strain ATCC 19364 / DSM 1382 / NCIMB 9332 / VKM B-1759) (Desulfovibrio gigas).